Reading from the N-terminus, the 244-residue chain is 7-cyano-7-deazaguanine synthase (244 aa).

Position 17–27 (17–27 (FSGGQDSTTCL)) interacts with ATP. Zn(2+) is bound by residues Cys205, Cys220, Cys223, and Cys226.

The protein belongs to the QueC family. Zn(2+) serves as cofactor.

The catalysed reaction is 7-carboxy-7-deazaguanine + NH4(+) + ATP = 7-cyano-7-deazaguanine + ADP + phosphate + H2O + H(+). The protein operates within purine metabolism; 7-cyano-7-deazaguanine biosynthesis. In terms of biological role, catalyzes the ATP-dependent conversion of 7-carboxy-7-deazaguanine (CDG) to 7-cyano-7-deazaguanine (preQ(0)). The sequence is that of 7-cyano-7-deazaguanine synthase from Bordetella pertussis (strain Tohama I / ATCC BAA-589 / NCTC 13251).